Consider the following 469-residue polypeptide: Properdin (469 aa).

A signal peptide spans Met-1–Ser-27. TSP type-1 domains lie at Asp-28–Arg-76, Ser-77–Pro-134, Met-136–Pro-191, His-193–Pro-255, Ala-257–Pro-313, Asp-315–Pro-377, and Lys-379–Lys-462. 3 disulfides stabilise this stretch: Cys-32–Cys-56, Cys-43–Cys-72, and Cys-57–Cys-75. Residues Trp-83 and Trp-86 are each glycosylated (C-linked (Man) tryptophan). 7 cysteine pairs are disulfide-bonded: Cys-89–Cys-127, Cys-93–Cys-133, Cys-104–Cys-111, Cys-132–Cys-170, Cys-148–Cys-184, Cys-152–Cys-190, and Cys-163–Cys-174. 3 C-linked (Man) tryptophan glycosylation sites follow: Trp-139, Trp-142, and Trp-145. The O-linked (Fuc...) threonine glycan is linked to Thr-151. Trp-196, Trp-199, and Trp-202 each carry a C-linked (Man) tryptophan glycan. 3 disulfides stabilise this stretch: Cys-205-Cys-248, Cys-209-Cys-254, and Cys-224-Cys-238. A glycan (O-linked (Fuc...) serine) is linked at Ser-208. A disordered region spans residues Glu-218–Cys-238. Trp-260 and Trp-263 each carry a C-linked (Man) tryptophan glycan. Intrachain disulfides connect Cys-269/Cys-306, Cys-273/Cys-312, and Cys-284/Cys-296. The O-linked (Fuc...) threonine glycan is linked to Thr-272. C-linked (Man) tryptophan glycosylation is found at Trp-321 and Trp-324. 3 cysteine pairs are disulfide-bonded: Cys-327-Cys-370, Cys-337-Cys-376, and Cys-350-Cys-360. An interaction with Complement C3 beta chain region spans residues Lys-351 to Arg-359. C-linked (Man) tryptophan glycosylation is found at Trp-382, Trp-385, and Trp-388. Disulfide bonds link Cys-391-Cys-455, Cys-395-Cys-461, and Cys-407-Cys-439. The N-linked (GlcNAc...) asparagine glycan is linked to Asn-428.

As to quaternary structure, in plasma, properdin exists as dimers, trimers or tetramers in the relative proportions of 26:54:20. Interacts with the pro-C3-convertase enzyme complex (C3b-Bb) comprised of Complement C3 beta chain (C3b) and the Complement factor B Bb fragment (Bb), where it binds (via its TSP type-1 5 domain) with C3b and Bb. This interaction stabilizes the complex and allows it to become the active C3-convertase enzyme complex (C3b-Bb-FP). Interacts with C3b. Interacts with CFB.

The protein localises to the secreted. In terms of biological role, a positive regulator of the alternate pathway of complement. It binds to and stabilizes the C3- and C5-convertase enzyme complexes. Inhibits CFI-CFH mediated degradation of Inhibits CFI-CFH mediated degradation of Complement C3 beta chain (C3b). The chain is Properdin (CFP) from Pongo abelii (Sumatran orangutan).